We begin with the raw amino-acid sequence, 87 residues long: MVKNSPISVIPQEEKRGSVEFQVFNFTNKIERLTSHLELHRRDYLSQRGLRKILGKRQRLLVYLSKKNRVRYRELIGQLGIREPKTG.

This sequence belongs to the universal ribosomal protein uS15 family. In terms of assembly, part of the 30S ribosomal subunit.

Its subcellular location is the plastid. It is found in the chloroplast. The chain is Small ribosomal subunit protein uS15c (rps15) from Nymphaea alba (White water-lily).